The primary structure comprises 269 residues: Tryptophan synthase alpha chain (269 aa).

Catalysis depends on proton acceptor residues glutamate 49 and aspartate 60.

The protein belongs to the TrpA family. As to quaternary structure, tetramer of two alpha and two beta chains.

The catalysed reaction is (1S,2R)-1-C-(indol-3-yl)glycerol 3-phosphate + L-serine = D-glyceraldehyde 3-phosphate + L-tryptophan + H2O. Its pathway is amino-acid biosynthesis; L-tryptophan biosynthesis; L-tryptophan from chorismate: step 5/5. In terms of biological role, the alpha subunit is responsible for the aldol cleavage of indoleglycerol phosphate to indole and glyceraldehyde 3-phosphate. The polypeptide is Tryptophan synthase alpha chain (Photobacterium profundum (strain SS9)).